Reading from the N-terminus, the 130-residue chain is Small ribosomal subunit protein uS8B (130 aa).

This sequence belongs to the universal ribosomal protein uS8 family. As to quaternary structure, component of the small ribosomal subunit (SSU). Mature yeast ribosomes consist of a small (40S) and a large (60S) subunit. The 40S small subunit contains 1 molecule of ribosomal RNA (18S rRNA) and 33 different proteins (encoded by 57 genes). The large 60S subunit contains 3 rRNA molecules (25S, 5.8S and 5S rRNA) and 46 different proteins (encoded by 81 genes).

It localises to the cytoplasm. Functionally, component of the ribosome, a large ribonucleoprotein complex responsible for the synthesis of proteins in the cell. The small ribosomal subunit (SSU) binds messenger RNAs (mRNAs) and translates the encoded message by selecting cognate aminoacyl-transfer RNA (tRNA) molecules. The large subunit (LSU) contains the ribosomal catalytic site termed the peptidyl transferase center (PTC), which catalyzes the formation of peptide bonds, thereby polymerizing the amino acids delivered by tRNAs into a polypeptide chain. The nascent polypeptides leave the ribosome through a tunnel in the LSU and interact with protein factors that function in enzymatic processing, targeting, and the membrane insertion of nascent chains at the exit of the ribosomal tunnel. This chain is Small ribosomal subunit protein uS8B, found in Saccharomyces cerevisiae (strain ATCC 204508 / S288c) (Baker's yeast).